Consider the following 113-residue polypeptide: Nucleoid-associated protein PMT_0025 (113 aa).

Belongs to the YbaB/EbfC family. As to quaternary structure, homodimer.

The protein resides in the cytoplasm. The protein localises to the nucleoid. Functionally, binds to DNA and alters its conformation. May be involved in regulation of gene expression, nucleoid organization and DNA protection. The polypeptide is Nucleoid-associated protein PMT_0025 (Prochlorococcus marinus (strain MIT 9313)).